The following is a 270-amino-acid chain: Putative phosphoenolpyruvate synthase regulatory protein (270 aa).

150–157 (GVSRCGKT) contributes to the ADP binding site.

It belongs to the pyruvate, phosphate/water dikinase regulatory protein family. PSRP subfamily.

The catalysed reaction is [pyruvate, water dikinase] + ADP = [pyruvate, water dikinase]-phosphate + AMP + H(+). The enzyme catalyses [pyruvate, water dikinase]-phosphate + phosphate + H(+) = [pyruvate, water dikinase] + diphosphate. In terms of biological role, bifunctional serine/threonine kinase and phosphorylase involved in the regulation of the phosphoenolpyruvate synthase (PEPS) by catalyzing its phosphorylation/dephosphorylation. In Shewanella piezotolerans (strain WP3 / JCM 13877), this protein is Putative phosphoenolpyruvate synthase regulatory protein.